A 332-amino-acid polypeptide reads, in one-letter code: Super small secreted glycoprotein (332 aa).

Residues 1-33 (MGSGYQLLQLPRERFRKTSFLVWVIILFQRAIS) form the signal peptide. N-linked (GlcNAc...) asparagine; by host glycosylation occurs at asparagine 41. Intrachain disulfides connect cysteine 109–cysteine 136 and cysteine 122–cysteine 148. N-linked (GlcNAc...) asparagine; by host glycosylation is found at asparagine 205, asparagine 229, asparagine 239, asparagine 258, and asparagine 269.

Belongs to the filoviruses glycoprotein family.

It localises to the secreted. This chain is Super small secreted glycoprotein (GP), found in Reston ebolavirus (strain Reston-89) (REBOV).